Reading from the N-terminus, the 387-residue chain is 4-hydroxy-3-methylbut-2-en-1-yl diphosphate synthase (flavodoxin) (387 aa).

Residues Cys-293, Cys-296, Cys-328, and Glu-335 each coordinate [4Fe-4S] cluster.

This sequence belongs to the IspG family. [4Fe-4S] cluster serves as cofactor.

It catalyses the reaction (2E)-4-hydroxy-3-methylbut-2-enyl diphosphate + oxidized [flavodoxin] + H2O + 2 H(+) = 2-C-methyl-D-erythritol 2,4-cyclic diphosphate + reduced [flavodoxin]. The protein operates within isoprenoid biosynthesis; isopentenyl diphosphate biosynthesis via DXP pathway; isopentenyl diphosphate from 1-deoxy-D-xylulose 5-phosphate: step 5/6. Converts 2C-methyl-D-erythritol 2,4-cyclodiphosphate (ME-2,4cPP) into 1-hydroxy-2-methyl-2-(E)-butenyl 4-diphosphate. The polypeptide is 4-hydroxy-3-methylbut-2-en-1-yl diphosphate synthase (flavodoxin) (Treponema denticola (strain ATCC 35405 / DSM 14222 / CIP 103919 / JCM 8153 / KCTC 15104)).